A 1460-amino-acid polypeptide reads, in one-letter code: Nucleoporin NUP159 (1460 aa).

An interaction with DBP5 region spans residues 1-500 (MSSLKDEVPT…SEQDATDPAS (500 aa)). One copy of the FG 1 repeat lies at 228–231 (AVFG). The stretch at 267 to 270 (PPFG) is one PXFG 1 repeat. Positions 401–435 (KSLSPTSEKIPIAGQEQEEKKKNNESSKALSENPF) are disordered. Position 404 is a phosphoserine (serine 404). Residues 462-470 (STFGAPSFG) form an SXFGXPXFG 1 repeat. Positions 483-504 (STSTGVASSEQDATDPASAKPV) are disordered. Residues 497-701 (DPASAKPVFG…KPNTSTKPKT (205 aa)) are interactions with CRM1 and GLE1. Residues 503 to 511 (PVFGKPAFG) form an SXFGXPXFG 2; approximate repeat. Residues 522-530 (YAFGKPSFG) form an SXFGXPXFG 3; approximate repeat. The PXFG 2 repeat unit spans residues 532-535 (PSFG). A disordered region spans residues 533-619 (SFGSGKSSVE…SAFGTASSNE (87 aa)). Composition is skewed to polar residues over residues 536 to 546 (SGKSSVESPAS), 556 to 567 (GTPSFGSGNSSV), 582 to 593 (GTPSFGSGNSSA), and 607 to 619 (FGTSAFGTASSNE). The stretch at 548 to 556 (SAFGKPSFG) is one SXFGXPXFG 4 repeat. A PXFG 3 repeat occupies 558–561 (PSFG). Residues 574–582 (SAFGKPSFG) form an SXFGXPXFG 5 repeat. A PXFG 4 repeat occupies 584 to 587 (PSFG). An SXFGXPXFG 6 repeat occupies 600-608 (SAFGKPSFG). An SXFG 1 repeat occupies 610–613 (SAFG). Residues 624–632 (SIFGKAAFG) form an SXFGXPXFG 7; approximate repeat. The FG 2 repeat unit spans residues 642 to 645 (ELFG). The segment at 647–704 (NFTISKPTVDSPKEVDSTSPFPSSGDQSEDESKSDVDSSSTPFGTKPNTSTKPKTNAF) is disordered. Position 657 is a phosphoserine (serine 657). A compositionally biased stretch (low complexity) spans 683–704 (DSSSTPFGTKPNTSTKPKTNAF). Residues 687 to 690 (TPFG) form an FG 3 repeat. The stretch at 704–707 (FDFG) is one FXFG 1 repeat. An SXFG 2 repeat occupies 709 to 712 (SSFG). Serine 724 bears the Phosphoserine mark. Composition is skewed to polar residues over residues 727-750 (TFKFGTQASPFSSQLGNKSPFSSF), 757-767 (NGSLSKGSTSE), and 778-800 (NGPNVSGNDLTDSTVEQTSSTRL). Residues 727–824 (TFKFGTQASP…EAQKSPIGKL (98 aa)) form a disordered region. Residues 728-731 (FKFG) form an FXFG 2 repeat. Residues serine 735 and serine 745 each carry the phosphoserine modification. Threonine 803 is subject to Phosphothreonine. Residues 804 to 814 (PSDEDGEVVEE) show a composition bias toward acidic residues. Residues serine 805 and serine 819 each carry the phosphoserine modification. One copy of the PXFG 5 repeat lies at 842-845 (PVFG). Positions 861 to 889 (TNITKPSSTTPAFSFGNSTMNKSNTSTVS) are enriched in polar residues. Positions 861–1092 (TNITKPSSTT…DINTDELPHG (232 aa)) are disordered. The FXFG 3 repeat unit spans residues 873–876 (FSFG). A Phosphoserine modification is found at serine 889. Over residues 917–936 (AKEERTGESSKKDHNDDPKD) the composition is skewed to basic and acidic residues. The residue at position 940 (serine 940) is a Phosphoserine. Positions 942–958 (SEISVRTSESAFDTTAN) are enriched in polar residues. Basic and acidic residues-rich tracts occupy residues 960–1002 (EIPK…KNNE), 1017–1027 (ALKKDNEKENF), 1035–1061 (QFEDHQSSEEDASEKDSRQSSEVKESD), and 1068–1092 (SDRDESISESYDKLEDINTDELPHG). An interaction with DYN2 region spans residues 1086–1175 (TDELPHGGEA…TCNFSVQTFE (90 aa)). Residues 1223-1460 (AEFTVLMENI…DFFKNLNMAK (238 aa)) form an interaction with NUP82 region. Coiled coils occupy residues 1279 to 1320 (EQMQ…YLFL) and 1383 to 1418 (AKLAKESLARDGLLKEIKLLREQVSRLQLEEKGKKA).

In terms of assembly, component of the nuclear pore complex (NPC). NPC constitutes the exclusive means of nucleocytoplasmic transport. NPCs allow the passive diffusion of ions and small molecules and the active, nuclear transport receptor-mediated bidirectional transport of macromolecules such as proteins, RNAs, ribonucleoparticles (RNPs), and ribosomal subunits across the nuclear envelope. Due to its 8-fold rotational symmetry, all subunits are present with 8 copies or multiples thereof. Part of the NUP82 subcomplex, interacts with NUP82 through its C-terminal coiled coil. This subcomplex is the base for interactions with NUP116 and GLE2, with NUP42 and GLE1 and with DYN2. Interacts directly with DYN2. Interacts through its FG repeats with karyopherins, such as heterodimeric mRNA transport factor MEX67/MTR2, CRM1 (XPO1), and PSE1 (GSP1-GDP dependent). Interaction with CRM1 (XPO1) is GSP1-GTP dependent and stimulated by RNA1. NUP159 also interacts with GLE1 and the ATP-dependent RNA helicase DBP5.

Its subcellular location is the nucleus. It is found in the nuclear pore complex. It localises to the nucleus membrane. Functions as a component of the nuclear pore complex (NPC). NPC components, collectively referred to as nucleoporins (NUPs), can play the role of both NPC structural components and of docking or interaction partners for transiently associated nuclear transport factors. Active directional transport is assured by both, a Phe-Gly (FG) repeat affinity gradient for these transport factors across the NPC and a transport cofactor concentration gradient across the nuclear envelope (GSP1 and GSP2 GTPases associated predominantly with GTP in the nucleus, with GDP in the cytoplasm). NUP159 plays an important role in several nuclear export pathways including poly(A)+ RNA, pre-ribosome, and protein export. This is Nucleoporin NUP159 (NUP159) from Saccharomyces cerevisiae (strain ATCC 204508 / S288c) (Baker's yeast).